Here is a 181-residue protein sequence, read N- to C-terminus: Transmembrane protein 154 (181 aa).

An N-terminal signal peptide occupies residues 1–22; that stretch reads MTVPCAALVLALGLAFGQSSQG. The segment at 19 to 47 is disordered; sequence SSQGNDEESEYSGQSITEEENSEDETTRS. The Extracellular portion of the chain corresponds to 23–74; it reads NDEESEYSGQSITEEENSEDETTRSALATVTTEALAENVNSTHTNDTSNQVE. A helical membrane pass occupies residues 75-95; the sequence is FILMVAIPLAALLILLFMVLI. Residues 96–181 are Cytoplasmic-facing; it reads ATYFKSKRPK…PNPSPSDNES (86 aa). Residues 103 to 122 are disordered; it reads RPKQEPSSQGSQSALQTHEL. The span at 107 to 118 shows a compositional bias: polar residues; it reads EPSSQGSQSALQ. Position 160 is a phosphotyrosine (tyrosine 160). Positions 161 to 181 are disordered; sequence ECLPTLKEEKEPNPSPSDNES. Residue serine 177 is modified to Phosphoserine.

The protein resides in the membrane. The chain is Transmembrane protein 154 (Tmem154) from Mus musculus (Mouse).